We begin with the raw amino-acid sequence, 364 residues long: Anthranilate phosphoribosyltransferase (364 aa).

Residues Gly-101, 104 to 105 (GD), Thr-109, 111 to 114 (NLST), 129 to 137 (KHGNRAASS), and Gly-141 contribute to the 5-phospho-alpha-D-ribose 1-diphosphate site. Gly-101 is an anthranilate binding site. Ser-113 lines the Mg(2+) pocket. Asn-132 lines the anthranilate pocket. Position 187 (Arg-187) interacts with anthranilate. Mg(2+)-binding residues include Asp-245 and Glu-246.

This sequence belongs to the anthranilate phosphoribosyltransferase family. Homodimer. Requires Mg(2+) as cofactor.

It catalyses the reaction N-(5-phospho-beta-D-ribosyl)anthranilate + diphosphate = 5-phospho-alpha-D-ribose 1-diphosphate + anthranilate. It participates in amino-acid biosynthesis; L-tryptophan biosynthesis; L-tryptophan from chorismate: step 2/5. Functionally, catalyzes the transfer of the phosphoribosyl group of 5-phosphorylribose-1-pyrophosphate (PRPP) to anthranilate to yield N-(5'-phosphoribosyl)-anthranilate (PRA). This Mycolicibacterium vanbaalenii (strain DSM 7251 / JCM 13017 / BCRC 16820 / KCTC 9966 / NRRL B-24157 / PYR-1) (Mycobacterium vanbaalenii) protein is Anthranilate phosphoribosyltransferase.